Consider the following 256-residue polypeptide: Imidazole glycerol phosphate synthase subunit HisF (256 aa).

Active-site residues include Asp-12 and Asp-131.

This sequence belongs to the HisA/HisF family. As to quaternary structure, heterodimer of HisH and HisF.

It is found in the cytoplasm. The enzyme catalyses 5-[(5-phospho-1-deoxy-D-ribulos-1-ylimino)methylamino]-1-(5-phospho-beta-D-ribosyl)imidazole-4-carboxamide + L-glutamine = D-erythro-1-(imidazol-4-yl)glycerol 3-phosphate + 5-amino-1-(5-phospho-beta-D-ribosyl)imidazole-4-carboxamide + L-glutamate + H(+). It functions in the pathway amino-acid biosynthesis; L-histidine biosynthesis; L-histidine from 5-phospho-alpha-D-ribose 1-diphosphate: step 5/9. Functionally, IGPS catalyzes the conversion of PRFAR and glutamine to IGP, AICAR and glutamate. The HisF subunit catalyzes the cyclization activity that produces IGP and AICAR from PRFAR using the ammonia provided by the HisH subunit. In Azotobacter vinelandii (strain DJ / ATCC BAA-1303), this protein is Imidazole glycerol phosphate synthase subunit HisF.